The following is a 260-amino-acid chain: Snake venom serine protease KN14 (260 aa).

A signal peptide spans 1–18 (MVLIRVLANLLILQLSYA). Residues 19–24 (QKSSEL) constitute a propeptide that is removed on maturation. The region spanning 25–251 (VIGGDECNIN…HLDWIQSIIA (227 aa)) is the Peptidase S1 domain. 5 disulfide bridges follow: C31–C165, C100–C258, C144–C212, C176–C191, and C202–C227. Residue H67 is the Charge relay system of the active site. N-linked (GlcNAc...) asparagine glycosylation occurs at N105. The Charge relay system role is filled by D112. N172 carries N-linked (GlcNAc...) asparagine glycosylation. S206 acts as the Charge relay system in catalysis. 2 N-linked (GlcNAc...) asparagine glycosylation sites follow: N213 and N255.

The protein belongs to the peptidase S1 family. Snake venom subfamily. Monomer. As to expression, expressed by the venom gland.

The protein localises to the secreted. Snake venom serine protease that may act in the hemostasis system of the prey. The sequence is that of Snake venom serine protease KN14 from Trimeresurus stejnegeri (Chinese green tree viper).